A 269-amino-acid polypeptide reads, in one-letter code: uncharacterized protein (269 aa).

To T.pallidum TP0678.

This is an uncharacterized protein from Borreliella burgdorferi (strain ATCC 35210 / DSM 4680 / CIP 102532 / B31) (Borrelia burgdorferi).